A 492-amino-acid chain; its full sequence is Catalase-1 (492 aa).

Catalysis depends on residues His65 and Asn138. Tyr348 provides a ligand contact to heme.

Belongs to the catalase family. Homotetramer and heterotetramer. At least six or seven isozymes are produced from a mixture of 3 gene products. Interacts with NCA1. Interacts with LSD1. Heme serves as cofactor.

It is found in the cytoplasm. The enzyme catalyses 2 H2O2 = O2 + 2 H2O. Functionally, occurs in almost all aerobically respiring organisms and serves to protect cells from the toxic effects of hydrogen peroxide. This Arabidopsis thaliana (Mouse-ear cress) protein is Catalase-1 (CAT1).